Reading from the N-terminus, the 84-residue chain is Small ribosomal subunit protein bS16 (84 aa).

It belongs to the bacterial ribosomal protein bS16 family.

This Burkholderia multivorans (strain ATCC 17616 / 249) protein is Small ribosomal subunit protein bS16.